Consider the following 265-residue polypeptide: Probable FAD synthase (265 aa).

It belongs to the PAPS reductase family. FAD1 subfamily.

The catalysed reaction is FMN + ATP + H(+) = FAD + diphosphate. It participates in cofactor biosynthesis; FAD biosynthesis; FAD from FMN: step 1/1. Functionally, adenylates FMN to FAD. In Schizosaccharomyces pombe (strain 972 / ATCC 24843) (Fission yeast), this protein is Probable FAD synthase.